A 284-amino-acid chain; its full sequence is Acetyl-coenzyme A carboxylase carboxyl transferase subunit beta (284 aa).

A CoA carboxyltransferase N-terminal domain is found at 25–284 (LWTKCPKCES…ICRMLLQKSA (260 aa)). The Zn(2+) site is built by C29, C32, C48, and C51. Residues 29–51 (CPKCESTLYRAEVRRNLEVCPKC) form a C4-type zinc finger.

It belongs to the AccD/PCCB family. Acetyl-CoA carboxylase is a heterohexamer composed of biotin carboxyl carrier protein (AccB), biotin carboxylase (AccC) and two subunits each of ACCase subunit alpha (AccA) and ACCase subunit beta (AccD). Zn(2+) serves as cofactor.

The protein resides in the cytoplasm. The catalysed reaction is N(6)-carboxybiotinyl-L-lysyl-[protein] + acetyl-CoA = N(6)-biotinyl-L-lysyl-[protein] + malonyl-CoA. Its pathway is lipid metabolism; malonyl-CoA biosynthesis; malonyl-CoA from acetyl-CoA: step 1/1. Its function is as follows. Component of the acetyl coenzyme A carboxylase (ACC) complex. Biotin carboxylase (BC) catalyzes the carboxylation of biotin on its carrier protein (BCCP) and then the CO(2) group is transferred by the transcarboxylase to acetyl-CoA to form malonyl-CoA. The protein is Acetyl-coenzyme A carboxylase carboxyl transferase subunit beta of Hydrogenovibrio crunogenus (strain DSM 25203 / XCL-2) (Thiomicrospira crunogena).